The chain runs to 871 residues: Valine--tRNA ligase (871 aa).

The 'HIGH' region motif lies at 47-57; the sequence is PNVTGRLHIGH. The 'KMSKS' region signature appears at 534 to 538; the sequence is KMSKS. Residue K537 participates in ATP binding. Positions 805 to 871 form a coiled coil; it reads DLTPILNRLN…IEEELARLTR (67 aa).

Belongs to the class-I aminoacyl-tRNA synthetase family. ValS type 1 subfamily. In terms of assembly, monomer.

The protein localises to the cytoplasm. The enzyme catalyses tRNA(Val) + L-valine + ATP = L-valyl-tRNA(Val) + AMP + diphosphate. In terms of biological role, catalyzes the attachment of valine to tRNA(Val). As ValRS can inadvertently accommodate and process structurally similar amino acids such as threonine, to avoid such errors, it has a 'posttransfer' editing activity that hydrolyzes mischarged Thr-tRNA(Val) in a tRNA-dependent manner. The chain is Valine--tRNA ligase from Nitratiruptor sp. (strain SB155-2).